Reading from the N-terminus, the 54-residue chain is Photosystem II reaction center protein K (54 aa).

The propeptide occupies 1 to 17 (MFQISLDMISNKINLLG). A helical transmembrane segment spans residues 29–49 (IVDVLPIIPILFFLLAFVWQA).

The protein belongs to the PsbK family. As to quaternary structure, PSII is composed of 1 copy each of membrane proteins PsbA, PsbB, PsbC, PsbD, PsbE, PsbF, PsbH, PsbI, PsbJ, PsbK, PsbL, PsbM, PsbT, PsbY, PsbZ, Psb30/Ycf12, at least 3 peripheral proteins of the oxygen-evolving complex and a large number of cofactors. It forms dimeric complexes.

It is found in the plastid. It localises to the chloroplast thylakoid membrane. Functionally, one of the components of the core complex of photosystem II (PSII). PSII is a light-driven water:plastoquinone oxidoreductase that uses light energy to abstract electrons from H(2)O, generating O(2) and a proton gradient subsequently used for ATP formation. It consists of a core antenna complex that captures photons, and an electron transfer chain that converts photonic excitation into a charge separation. The polypeptide is Photosystem II reaction center protein K (Euglena stellata).